A 255-amino-acid chain; its full sequence is Ribosome maturation factor RimP (255 aa).

Positions 177 to 255 (LRRGSAPPQD…ARLKNRDTLH (79 aa)) are disordered. Residues 186-202 (DGEDVDEEAGEAPEDEV) are compositionally biased toward acidic residues. Positions 216-230 (PKMDKKSDKKSDKPV) are enriched in basic and acidic residues.

This sequence belongs to the RimP family.

The protein resides in the cytoplasm. Its function is as follows. Required for maturation of 30S ribosomal subunits. The protein is Ribosome maturation factor RimP of Methylorubrum populi (strain ATCC BAA-705 / NCIMB 13946 / BJ001) (Methylobacterium populi).